Here is an 81-residue protein sequence, read N- to C-terminus: Insulin (81 aa).

Intrachain disulfides connect Cys-7-Cys-67, Cys-19-Cys-80, and Cys-66-Cys-71. Residues 33–58 (DVEQPLVNGPLHGEVGELPFQHEEYQ) constitute a propeptide, c peptide.

It belongs to the insulin family. Heterodimer of a B chain and an A chain linked by two disulfide bonds.

It is found in the secreted. Insulin decreases blood glucose concentration. It increases cell permeability to monosaccharides, amino acids and fatty acids. It accelerates glycolysis, the pentose phosphate cycle, and glycogen synthesis in liver. The polypeptide is Insulin (INS) (Anas platyrhynchos (Mallard)).